We begin with the raw amino-acid sequence, 344 residues long: Lipase chaperone (344 aa).

A helical transmembrane segment spans residues 14 to 34; it reads AAIYGVVGLAAIAGVAMWSGA.

This sequence belongs to the lipase chaperone family.

The protein resides in the cell inner membrane. Its function is as follows. May be involved in the folding of the extracellular lipase during its passage through the periplasm. The protein is Lipase chaperone of Burkholderia cenocepacia (strain HI2424).